The sequence spans 524 residues: Anthranilate synthase component 1 (524 aa).

Residues Ser-55 and 297–299 (PYM) each bind L-tryptophan. Position 332 to 333 (332 to 333 (GT)) interacts with chorismate. Mg(2+) is bound at residue Glu-359. Chorismate contacts are provided by residues Tyr-447, Arg-467, 485-487 (GAG), and Gly-487. Glu-500 provides a ligand contact to Mg(2+).

The protein belongs to the anthranilate synthase component I family. Heterotetramer consisting of two non-identical subunits: a beta subunit (TrpG) and a large alpha subunit (TrpE). Mg(2+) serves as cofactor.

It carries out the reaction chorismate + L-glutamine = anthranilate + pyruvate + L-glutamate + H(+). Its pathway is amino-acid biosynthesis; L-tryptophan biosynthesis; L-tryptophan from chorismate: step 1/5. Feedback inhibited by tryptophan. In terms of biological role, part of a heterotetrameric complex that catalyzes the two-step biosynthesis of anthranilate, an intermediate in the biosynthesis of L-tryptophan. In the first step, the glutamine-binding beta subunit (TrpG) of anthranilate synthase (AS) provides the glutamine amidotransferase activity which generates ammonia as a substrate that, along with chorismate, is used in the second step, catalyzed by the large alpha subunit of AS (TrpE) to produce anthranilate. In the absence of TrpG, TrpE can synthesize anthranilate directly from chorismate and high concentrations of ammonia. This Haloferax volcanii (strain ATCC 29605 / DSM 3757 / JCM 8879 / NBRC 14742 / NCIMB 2012 / VKM B-1768 / DS2) (Halobacterium volcanii) protein is Anthranilate synthase component 1 (trpE).